The following is an 87-amino-acid chain: MKNLDKGTVIRTVLLFVALVNQTLIMFGKSRLPISEDQVNTLADALYLAGSTIFTIVTTLVAWFKNNYVTSKGKLQKETLKQKGLTK.

A helical transmembrane segment spans residues 44-64 (DALYLAGSTIFTIVTTLVAWF).

Belongs to the SPP1 holin family.

Its subcellular location is the membrane. This is an uncharacterized protein from Bacillus licheniformis.